We begin with the raw amino-acid sequence, 218 residues long: Large ribosomal subunit protein uL2c (218 aa).

Positions 165-192 (GVVKNPVDHPHGGGEGRSPIGRSHPVTP) are disordered.

The protein belongs to the universal ribosomal protein uL2 family. As to quaternary structure, part of the 50S ribosomal subunit.

Its subcellular location is the plastid. The protein resides in the chloroplast. The chain is Large ribosomal subunit protein uL2c (rpl2) from Bigelowiella natans (Pedinomonas minutissima).